Reading from the N-terminus, the 91-residue chain is UPF0358 protein SERP0701 (91 aa).

It belongs to the UPF0358 family.

In Staphylococcus epidermidis (strain ATCC 35984 / DSM 28319 / BCRC 17069 / CCUG 31568 / BM 3577 / RP62A), this protein is UPF0358 protein SERP0701.